Consider the following 416-residue polypeptide: Glutamyl-tRNA reductase (416 aa).

Residues Thr-49 to Arg-52, Ser-105, Glu-110 to Gln-112, and Gln-116 each bind substrate. Residue Cys-50 is the Nucleophile of the active site. Position 185–190 (Gly-185–Ile-190) interacts with NADP(+).

The protein belongs to the glutamyl-tRNA reductase family. Homodimer.

It carries out the reaction (S)-4-amino-5-oxopentanoate + tRNA(Glu) + NADP(+) = L-glutamyl-tRNA(Glu) + NADPH + H(+). It functions in the pathway porphyrin-containing compound metabolism; protoporphyrin-IX biosynthesis; 5-aminolevulinate from L-glutamyl-tRNA(Glu): step 1/2. Its function is as follows. Catalyzes the NADPH-dependent reduction of glutamyl-tRNA(Glu) to glutamate 1-semialdehyde (GSA). The sequence is that of Glutamyl-tRNA reductase from Nitrosomonas europaea (strain ATCC 19718 / CIP 103999 / KCTC 2705 / NBRC 14298).